Reading from the N-terminus, the 362-residue chain is tRNA-specific 2-thiouridylase MnmA (362 aa).

ATP-binding positions include 6–13 and Leu32; that span reads AMSGGVDS. Cys101 functions as the Nucleophile in the catalytic mechanism. Cys101 and Cys197 are disulfide-bonded. Gly125 contributes to the ATP binding site. Positions 147–149 are interaction with tRNA; that stretch reads KDQ. The active-site Cysteine persulfide intermediate is Cys197.

The protein belongs to the MnmA/TRMU family.

Its subcellular location is the cytoplasm. The enzyme catalyses S-sulfanyl-L-cysteinyl-[protein] + uridine(34) in tRNA + AH2 + ATP = 2-thiouridine(34) in tRNA + L-cysteinyl-[protein] + A + AMP + diphosphate + H(+). Functionally, catalyzes the 2-thiolation of uridine at the wobble position (U34) of tRNA, leading to the formation of s(2)U34. In Acidothermus cellulolyticus (strain ATCC 43068 / DSM 8971 / 11B), this protein is tRNA-specific 2-thiouridylase MnmA.